Consider the following 324-residue polypeptide: Methionyl-tRNA formyltransferase (324 aa).

109–112 lines the (6S)-5,6,7,8-tetrahydrofolate pocket; sequence SLLP. Positions 305–324 are disordered; it reads LHPGESFHKATQDNQGASET.

It belongs to the Fmt family.

It carries out the reaction L-methionyl-tRNA(fMet) + (6R)-10-formyltetrahydrofolate = N-formyl-L-methionyl-tRNA(fMet) + (6S)-5,6,7,8-tetrahydrofolate + H(+). Its function is as follows. Attaches a formyl group to the free amino group of methionyl-tRNA(fMet). The formyl group appears to play a dual role in the initiator identity of N-formylmethionyl-tRNA by promoting its recognition by IF2 and preventing the misappropriation of this tRNA by the elongation apparatus. In Nitrosomonas europaea (strain ATCC 19718 / CIP 103999 / KCTC 2705 / NBRC 14298), this protein is Methionyl-tRNA formyltransferase.